Reading from the N-terminus, the 127-residue chain is Small ribosomal subunit protein eS6 (127 aa).

It belongs to the eukaryotic ribosomal protein eS6 family.

This is Small ribosomal subunit protein eS6 from Picrophilus torridus (strain ATCC 700027 / DSM 9790 / JCM 10055 / NBRC 100828 / KAW 2/3).